The sequence spans 191 residues: Fe/S biogenesis protein NfuA (191 aa).

Residues C149 and C152 each contribute to the [4Fe-4S] cluster site.

Belongs to the NfuA family. As to quaternary structure, homodimer. [4Fe-4S] cluster serves as cofactor.

Involved in iron-sulfur cluster biogenesis. Binds a 4Fe-4S cluster, can transfer this cluster to apoproteins, and thereby intervenes in the maturation of Fe/S proteins. Could also act as a scaffold/chaperone for damaged Fe/S proteins. This is Fe/S biogenesis protein NfuA from Yersinia enterocolitica serotype O:8 / biotype 1B (strain NCTC 13174 / 8081).